Here is a 1175-residue protein sequence, read N- to C-terminus: DNA-directed RNA polymerase subunit beta (1175 aa).

The tract at residues 1142 to 1175 (PMELSGSDDDEFDQAGASLGINLSRDERSDADIA) is disordered. Over residues 1165 to 1175 (SRDERSDADIA) the composition is skewed to basic and acidic residues.

Belongs to the RNA polymerase beta chain family. The RNAP catalytic core consists of 2 alpha, 1 beta, 1 beta' and 1 omega subunit. When a sigma factor is associated with the core the holoenzyme is formed, which can initiate transcription.

The enzyme catalyses RNA(n) + a ribonucleoside 5'-triphosphate = RNA(n+1) + diphosphate. DNA-dependent RNA polymerase catalyzes the transcription of DNA into RNA using the four ribonucleoside triphosphates as substrates. In Corynebacterium diphtheriae (strain ATCC 700971 / NCTC 13129 / Biotype gravis), this protein is DNA-directed RNA polymerase subunit beta.